Reading from the N-terminus, the 162-residue chain is Phosphopantetheine adenylyltransferase (162 aa).

Residue Thr-10 coordinates substrate. Residues 10–11 (TF) and His-18 each bind ATP. Residues Lys-42, Leu-74, and Arg-88 each contribute to the substrate site. ATP is bound by residues 89-91 (GLR), Glu-99, and 124-130 (YAFLSSS).

It belongs to the bacterial CoaD family. Homohexamer. Mg(2+) serves as cofactor.

The protein localises to the cytoplasm. The catalysed reaction is (R)-4'-phosphopantetheine + ATP + H(+) = 3'-dephospho-CoA + diphosphate. Its pathway is cofactor biosynthesis; coenzyme A biosynthesis; CoA from (R)-pantothenate: step 4/5. Functionally, reversibly transfers an adenylyl group from ATP to 4'-phosphopantetheine, yielding dephospho-CoA (dPCoA) and pyrophosphate. This is Phosphopantetheine adenylyltransferase from Methylococcus capsulatus (strain ATCC 33009 / NCIMB 11132 / Bath).